Consider the following 995-residue polypeptide: S1 RNA-binding domain-containing protein 1 (995 aa).

A disordered region spans residues 23–78 (SFSELSSASEEDDKEDSAWEPQKKVPRSRKQPPPKESKPKRMPQVKKNAPQISDGS). A Glycyl lysine isopeptide (Lys-Gly) (interchain with G-Cter in SUMO2) cross-link involves residue Lys-84. Basic residues predominate over residues 116–132 (TKRKCAAQPHAVRRTKK). A disordered region spans residues 116-164 (TKRKCAAQPHAVRRTKKLKVDEETSKASYLEGESNSSETPSTSTVWGGT). Residue Lys-134 forms a Glycyl lysine isopeptide (Lys-Gly) (interchain with G-Cter in SUMO2) linkage. The segment covering 146-159 (EGESNSSETPSTST) has biased composition (low complexity). Glycyl lysine isopeptide (Lys-Gly) (interchain with G-Cter in SUMO2) cross-links involve residues Lys-166, Lys-167, and Lys-183. A Glycyl lysine isopeptide (Lys-Gly) (interchain with G-Cter in SUMO1); alternate cross-link involves residue Lys-185. A Glycyl lysine isopeptide (Lys-Gly) (interchain with G-Cter in SUMO2); alternate cross-link involves residue Lys-185. Residues 258-288 (ADSLREVQQTLEELRAVAKKVHSTIQKIKKE) are a coiled coil. Position 861 is a phosphoserine (Ser-861). One can recognise an S1 motif domain in the interval 919-992 (GTVLTGKVEN…PRSRITLDLI (74 aa)). A Glycyl lysine isopeptide (Lys-Gly) (interchain with G-Cter in SUMO2) cross-link involves residue Lys-955. Position 964 is a phosphoserine (Ser-964).

In Pongo abelii (Sumatran orangutan), this protein is S1 RNA-binding domain-containing protein 1 (SRBD1).